The following is a 112-amino-acid chain: UPF0060 membrane protein Daro_2632 (112 aa).

A run of 4 helical transmembrane segments spans residues 7–27, 34–54, 59–79, and 89–109; these read VLGL…LPWL, PVWL…LLTL, AGRI…IWLW, and WDLV…LQPA.

Belongs to the UPF0060 family.

The protein localises to the cell inner membrane. In Dechloromonas aromatica (strain RCB), this protein is UPF0060 membrane protein Daro_2632.